Here is a 457-residue protein sequence, read N- to C-terminus: Oxygen-independent coproporphyrinogen III oxidase (457 aa).

The region spanning 47 to 280 (RYPERPLSLY…QETIVSLTQA (234 aa)) is the Radical SAM core domain. Residue tyrosine 56 participates in S-adenosyl-L-methionine binding. [4Fe-4S] cluster is bound by residues cysteine 62 and cysteine 66. An S-adenosyl-L-methionine-binding site is contributed by phenylalanine 68. A [4Fe-4S] cluster-binding site is contributed by cysteine 69. Residues glycine 112, 113–114 (GT), glutamate 145, glutamine 172, arginine 184, aspartate 209, alanine 243, and isoleucine 329 contribute to the S-adenosyl-L-methionine site.

Belongs to the anaerobic coproporphyrinogen-III oxidase family. As to quaternary structure, monomer. It depends on [4Fe-4S] cluster as a cofactor.

It is found in the cytoplasm. It catalyses the reaction coproporphyrinogen III + 2 S-adenosyl-L-methionine = protoporphyrinogen IX + 2 5'-deoxyadenosine + 2 L-methionine + 2 CO2. Its pathway is porphyrin-containing compound metabolism; protoporphyrin-IX biosynthesis; protoporphyrinogen-IX from coproporphyrinogen-III (AdoMet route): step 1/1. In terms of biological role, involved in the heme biosynthesis. Catalyzes the anaerobic oxidative decarboxylation of propionate groups of rings A and B of coproporphyrinogen III to yield the vinyl groups in protoporphyrinogen IX. This is Oxygen-independent coproporphyrinogen III oxidase (hemN) from Salmonella typhi.